We begin with the raw amino-acid sequence, 369 residues long: MASGAQLPPQPSSSEVSAVQSPGGRPGAGLEETALGVPLPPSPGEAPLPRSNRSRCPGTRQPGAASLHAASAAVPVRPRRGTAPAGKTADAVPAAAPEQAPRPAPQSRKPRNLEGDLDERRLLCHLQLAQDREARLWRGGKPQDEICDAFEEVVLWLLRLQNTFYFSQSTFNLALTIFGRLLISVKVKEKYLHCATITSLRLAAKVNEEEEFIPQVKDFTKHYGSDYSPNELLRMELAILDRLHWDLYIGTPLDFLTIFHALVVLSWPHVLELLPQRNPSLHVASLTRQLQHCMAGHQLLQFKGSTLALVIITLELERLMPGWCAPISDLLKKAQVGDMQYSCCKELVMQQLRSLQSSSCTDNFVSPAN.

A disordered region spans residues 1–116 (MASGAQLPPQ…SRKPRNLEGD (116 aa)). Low complexity-rich tracts occupy residues 64 to 76 (AASL…AVPV) and 83 to 101 (APAG…EQAP).

Belongs to the cyclin family.

The chain is Cyclin-I2 (CCNI2) from Homo sapiens (Human).